The sequence spans 289 residues: Heterokaryon incompatibility protein S (289 aa).

The segment at 1–227 is globular domain; the sequence is MSEPFEIVAG…KIDAIVGRNS (227 aa). Residues 218 to 289 form a prion domain (PrD) region; that stretch reads KIDAIVGRNS…EYGGKGFWDN (72 aa).

In terms of assembly, homodimer. Forms heterodimers with het-s.

Its subcellular location is the cytoplasm. Its function is as follows. Responsible for heterokaryon incompatibility, a process that ensures that during spontaneous, vegetative cell fusion only compatible cells from the same colony survive (non-self-recognition). Interaction with the prion form [het-s] of incompatible cells triggers a lethal reaction that prevents the formation of viable heterokaryons. The sequence is that of Heterokaryon incompatibility protein S (het-S) from Podospora anserina (strain S / ATCC MYA-4624 / DSM 980 / FGSC 10383) (Pleurage anserina).